A 656-amino-acid chain; its full sequence is ATP-dependent zinc metalloprotease FtsH (656 aa).

Topologically, residues 1–10 (MGDNRWLKNS) are cytoplasmic. The chain crosses the membrane as a helical span at residues 11 to 31 (FVYLIILVAALALFFQYLGPG). Residues 32–116 (ASQTEEKGIA…IVQPAPAWGG (85 aa)) lie on the Extracellular side of the membrane. The helical transmembrane segment at 117–137 (LLSIFTILLPTLLLIGFFVFF) threads the bilayer. Over 138-656 (MRQAQGSNNQ…GLGGPSPLPA (519 aa)) the chain is Cytoplasmic. Residue 209 to 216 (GPPGTGKT) participates in ATP binding. His-432 serves as a coordination point for Zn(2+). Glu-433 is an active-site residue. The Zn(2+) site is built by His-436 and Asp-511. Residues 622-632 (FSKSGSTTPNG) are compositionally biased toward polar residues. Positions 622 to 656 (FSKSGSTTPNGRTEDRPAQPDAPQMGLGGPSPLPA) are disordered.

This sequence in the central section; belongs to the AAA ATPase family. In the C-terminal section; belongs to the peptidase M41 family. As to quaternary structure, homohexamer. Zn(2+) serves as cofactor.

It localises to the cell membrane. Its function is as follows. Acts as a processive, ATP-dependent zinc metallopeptidase for both cytoplasmic and membrane proteins. Plays a role in the quality control of integral membrane proteins. The protein is ATP-dependent zinc metalloprotease FtsH of Chloroflexus aggregans (strain MD-66 / DSM 9485).